A 129-amino-acid chain; its full sequence is Small ribosomal subunit protein uS8 (129 aa).

It belongs to the universal ribosomal protein uS8 family. As to quaternary structure, part of the 30S ribosomal subunit. Contacts proteins S5 and S12.

In terms of biological role, one of the primary rRNA binding proteins, it binds directly to 16S rRNA central domain where it helps coordinate assembly of the platform of the 30S subunit. The chain is Small ribosomal subunit protein uS8 from Spiroplasma kunkelii.